Reading from the N-terminus, the 467-residue chain is MSIGNIVQCIGAVVDIEFPRDAMPKVYDALVLEEGNDKSFAEKGLTFEVQQQLGDGVVRTIALGSSDGLRRGMSVMSTGAPISVPVGHGTLGRIMDVLGRPIDEAGPIEADEKRAIHQKAPKFDELSPSVDLLETGIKVIDLVCPFAKGGKVGLFGGAGVGKTVNMMELINNIAKQHSGLSVFAGVGERTREGNDFYHEMKDSNVLDKVAMVFGQMNEPPGNRLRVALTGLTMAERFRDEGRDILFFVDNIYRYTLAGTEVSALLGRMPSAVGYQPTLAEEMGKLQERITSTKTGSITSIQAVYVPADDLTDPSPATTFLHLDSTVVLSRDIAALGIYPAVDPLDSTSRQLDPQVVGTEHYEVARRVQQTLQRYKELRDIIAILGMDELSPEDKLAVSRARKIQRFLSQPFHVAEVFTGSPGKYVPLKETIRGFKMLVDGECDHLPEQAFYMVGSIDEAFEKAKKLQ.

156–163 contacts ATP; sequence GGAGVGKT.

Belongs to the ATPase alpha/beta chains family. As to quaternary structure, F-type ATPases have 2 components, CF(1) - the catalytic core - and CF(0) - the membrane proton channel. CF(1) has five subunits: alpha(3), beta(3), gamma(1), delta(1), epsilon(1). CF(0) has three main subunits: a(1), b(2) and c(9-12). The alpha and beta chains form an alternating ring which encloses part of the gamma chain. CF(1) is attached to CF(0) by a central stalk formed by the gamma and epsilon chains, while a peripheral stalk is formed by the delta and b chains.

It is found in the cell inner membrane. The catalysed reaction is ATP + H2O + 4 H(+)(in) = ADP + phosphate + 5 H(+)(out). Produces ATP from ADP in the presence of a proton gradient across the membrane. The catalytic sites are hosted primarily by the beta subunits. This chain is ATP synthase subunit beta, found in Cupriavidus metallidurans (strain ATCC 43123 / DSM 2839 / NBRC 102507 / CH34) (Ralstonia metallidurans).